We begin with the raw amino-acid sequence, 306 residues long: Pantothenate kinase (306 aa).

Residue 91–98 participates in ATP binding; that stretch reads GSVAVGKS.

Belongs to the prokaryotic pantothenate kinase family.

Its subcellular location is the cytoplasm. The enzyme catalyses (R)-pantothenate + ATP = (R)-4'-phosphopantothenate + ADP + H(+). It functions in the pathway cofactor biosynthesis; coenzyme A biosynthesis; CoA from (R)-pantothenate: step 1/5. The protein is Pantothenate kinase of Streptococcus agalactiae serotype Ia (strain ATCC 27591 / A909 / CDC SS700).